A 540-amino-acid polypeptide reads, in one-letter code: Probable metabolite transport protein YFL040W (540 aa).

The Cytoplasmic segment spans residues M1–T29. Residues A30–L50 form a helical membrane-spanning segment. The Extracellular segment spans residues T51–Q67. A glycan (N-linked (GlcNAc...) asparagine) is linked at N52. The helical transmembrane segment at G68–M88 threads the bilayer. Topologically, residues N89 to G101 are cytoplasmic. Residues I102 to L122 form a helical membrane-spanning segment. At I123–M126 the chain is on the extracellular side. The chain crosses the membrane as a helical span at residues I127–I147. Residues P148–Y158 are Cytoplasmic-facing. Residues I159–L179 traverse the membrane as a helical segment. Residues W180 to R187 are Extracellular-facing. Residues I188–P208 traverse the membrane as a helical segment. The Cytoplasmic portion of the chain corresponds to E209–P275. A helical transmembrane segment spans residues L276–G296. Topologically, residues Y297 to L313 are extracellular. The helical transmembrane segment at F314–I334 threads the bilayer. The Cytoplasmic segment spans residues D335–L341. A helical membrane pass occupies residues I342–V362. Residues K363–P385 are Extracellular-facing. A glycan (N-linked (GlcNAc...) asparagine) is linked at N374. The chain crosses the membrane as a helical span at residues F386–L406. The Cytoplasmic segment spans residues S407–A428. The chain crosses the membrane as a helical span at residues I429–I449. At E450–T455 the chain is on the extracellular side. Residues T456–P476 form a helical membrane-spanning segment. At E477 to I540 the chain is on the cytoplasmic side. The disordered stretch occupies residues N499–I540. The segment covering P509–G524 has biased composition (polar residues).

Belongs to the major facilitator superfamily. Sugar transporter (TC 2.A.1.1) family.

Its subcellular location is the membrane. The chain is Probable metabolite transport protein YFL040W from Saccharomyces cerevisiae (strain ATCC 204508 / S288c) (Baker's yeast).